The chain runs to 71 residues: Beta-defensin 124 (71 aa).

A signal peptide spans 1–22 (MTQLLLFLVALLVLGHVPSGRS). Disulfide bonds link Cys27-Cys54, Cys34-Cys48, and Cys38-Cys55.

This sequence belongs to the beta-defensin family.

It localises to the secreted. Has antibacterial activity. The protein is Beta-defensin 124 (DEFB124) of Homo sapiens (Human).